We begin with the raw amino-acid sequence, 318 residues long: Malate dehydrogenase (318 aa).

Residues Gly10 to Gly15 and Asp34 contribute to the NAD(+) site. 2 residues coordinate substrate: Arg83 and Arg89. Residues Asn96 and Leu119–Asn121 each bind NAD(+). Positions 121 and 152 each coordinate substrate. Catalysis depends on His176, which acts as the Proton acceptor.

The protein belongs to the LDH/MDH superfamily. MDH type 3 family.

The enzyme catalyses (S)-malate + NAD(+) = oxaloacetate + NADH + H(+). Its function is as follows. Catalyzes the reversible oxidation of malate to oxaloacetate. The sequence is that of Malate dehydrogenase from Syntrophotalea carbinolica (strain DSM 2380 / NBRC 103641 / GraBd1) (Pelobacter carbinolicus).